We begin with the raw amino-acid sequence, 122 residues long: Large ribosomal subunit protein uL18 (122 aa).

This sequence belongs to the universal ribosomal protein uL18 family. As to quaternary structure, part of the 50S ribosomal subunit; part of the 5S rRNA/L5/L18/L25 subcomplex. Contacts the 5S and 23S rRNAs.

Its function is as follows. This is one of the proteins that bind and probably mediate the attachment of the 5S RNA into the large ribosomal subunit, where it forms part of the central protuberance. The protein is Large ribosomal subunit protein uL18 of Mycobacterium leprae (strain TN).